Here is a 261-residue protein sequence, read N- to C-terminus: VNTITFDVGNATINKYATFMESLRNEAKDPTLKCYGIPMLPDSNLTPKYVLVKLQDASSKTITLMLRRNNLYVMGYSDLYNGKCRYHIFNDISSTESTDVENTLCPNSNSREKKAINYNSQYSTLQNKAGVSSRSQVQLGIQILNSDIGKISGVSTFTDKTEAEFLLVAIQMVSEAARFKYIENQVKTNFNRAFNPNPKVLSLEENWGKISLAIHNAKNGALTSPLELKNADDTKWIVLRVDEIKPDMGLLNYVSGTCQTT.

An N-linked (GlcNAc...) asparagine; in PD-L3 glycan is attached at Asn10. Cystine bridges form between Cys34–Cys258 and Cys84–Cys105. Glu175 is an active-site residue.

Belongs to the ribosome-inactivating protein family. Type 1 RIP subfamily.

The catalysed reaction is Endohydrolysis of the N-glycosidic bond at one specific adenosine on the 28S rRNA.. Inhibits protein synthesis. Does not cleave supercoiled pBR322 dsDNA. The chain is Ribosome-inactivating protein PD-L3/PD-L4 from Phytolacca dioica (Bella sombra tree).